The chain runs to 597 residues: Putative Xaa-Pro dipeptidyl-peptidase (597 aa).

Active-site charge relay system residues include Ser-224, Asp-336, and His-367.

The protein belongs to the peptidase S15 family.

It carries out the reaction Hydrolyzes Xaa-Pro-|- bonds to release unblocked, N-terminal dipeptides from substrates including Ala-Pro-|-p-nitroanilide and (sequentially) Tyr-Pro-|-Phe-Pro-|-Gly-Pro-|-Ile.. The sequence is that of Putative Xaa-Pro dipeptidyl-peptidase from Bacillus anthracis.